The following is a 621-amino-acid chain: UvrABC system protein C (621 aa).

The 80-residue stretch at 21–100 (AEPGVYLMRD…IKTYQPPYNV (80 aa)) folds into the GIY-YIG domain. The 36-residue stretch at 210-245 (DELIRELKEKMAQAAQQENYEAAARYRDQIRGLEQL) folds into the UVR domain.

The protein belongs to the UvrC family. In terms of assembly, interacts with UvrB in an incision complex.

It is found in the cytoplasm. The UvrABC repair system catalyzes the recognition and processing of DNA lesions. UvrC both incises the 5' and 3' sides of the lesion. The N-terminal half is responsible for the 3' incision and the C-terminal half is responsible for the 5' incision. The chain is UvrABC system protein C from Synechococcus sp. (strain JA-3-3Ab) (Cyanobacteria bacterium Yellowstone A-Prime).